A 327-amino-acid chain; its full sequence is Peroxidase 15 (327 aa).

The first 23 residues, 1–23 (MASFSPLLAMALAIFIFSSHSNA), serve as a signal peptide directing secretion. Pyrrolidone carboxylic acid is present on Q24. Disulfide bonds link C34–C115, C67–C72, C121–C323, and C200–C232. N36 carries an N-linked (GlcNAc...) asparagine glycan. The active-site Proton acceptor is H65. The Ca(2+) site is built by D66, V69, G71, D73, and S75. N-linked (GlcNAc...) asparagine glycosylation is found at N81, N96, and N159. Position 163 (P163) interacts with substrate. N168 and N171 each carry an N-linked (GlcNAc...) asparagine glycan. H193 is a binding site for heme b. T194 contacts Ca(2+). N-linked (GlcNAc...) asparagine glycans are attached at residues N209 and N221. Residues D245, T248, and D253 each contribute to the Ca(2+) site. 2 N-linked (GlcNAc...) asparagine glycosylation sites follow: N287 and N291.

Belongs to the peroxidase family. Classical plant (class III) peroxidase subfamily. Ca(2+) serves as cofactor. Heme b is required as a cofactor.

It localises to the secreted. It catalyses the reaction 2 a phenolic donor + H2O2 = 2 a phenolic radical donor + 2 H2O. In terms of biological role, removal of H(2)O(2), oxidation of toxic reductants, biosynthesis and degradation of lignin, suberization, auxin catabolism, response to environmental stresses such as wounding, pathogen attack and oxidative stress. These functions might be dependent on each isozyme/isoform in each plant tissue. The protein is Peroxidase 15 of Ipomoea batatas (Sweet potato).